We begin with the raw amino-acid sequence, 215 residues long: 3-isopropylmalate dehydratase small subunit (215 aa).

The protein belongs to the LeuD family. LeuD type 1 subfamily. Heterodimer of LeuC and LeuD.

The enzyme catalyses (2R,3S)-3-isopropylmalate = (2S)-2-isopropylmalate. It functions in the pathway amino-acid biosynthesis; L-leucine biosynthesis; L-leucine from 3-methyl-2-oxobutanoate: step 2/4. Functionally, catalyzes the isomerization between 2-isopropylmalate and 3-isopropylmalate, via the formation of 2-isopropylmaleate. The polypeptide is 3-isopropylmalate dehydratase small subunit (Teredinibacter turnerae (strain ATCC 39867 / T7901)).